A 292-amino-acid chain; its full sequence is Ribosome-inactivating protein saporin-2 (292 aa).

The first 24 residues, Met-1–Ala-24, serve as a signal peptide directing secretion. Glu-200 is a catalytic residue.

It belongs to the ribosome-inactivating protein family. Type 1 RIP subfamily.

The enzyme catalyses Endohydrolysis of the N-glycosidic bond at one specific adenosine on the 28S rRNA.. Its function is as follows. Ribosome-inactivating protein of type 1, inhibits protein synthesis in animal cells. Useful as immunotoxin for pharmacological applications. The protein is Ribosome-inactivating protein saporin-2 (SAP2) of Saponaria officinalis (Common soapwort).